We begin with the raw amino-acid sequence, 873 residues long: Bifunctional uridylyltransferase/uridylyl-removing enzyme (873 aa).

Positions M1 to I332 are uridylyltransferase. The uridylyl-removing stretch occupies residues I333–T692. One can recognise an HD domain in the interval V451–L573. 2 consecutive ACT domains span residues E693–R777 and L800–S873.

This sequence belongs to the GlnD family. Requires Mg(2+) as cofactor.

It catalyses the reaction [protein-PII]-L-tyrosine + UTP = [protein-PII]-uridylyl-L-tyrosine + diphosphate. The catalysed reaction is [protein-PII]-uridylyl-L-tyrosine + H2O = [protein-PII]-L-tyrosine + UMP + H(+). Uridylyltransferase (UTase) activity is inhibited by glutamine, while glutamine activates uridylyl-removing (UR) activity. In terms of biological role, modifies, by uridylylation and deuridylylation, the PII regulatory proteins (GlnB and homologs), in response to the nitrogen status of the cell that GlnD senses through the glutamine level. Under low glutamine levels, catalyzes the conversion of the PII proteins and UTP to PII-UMP and PPi, while under higher glutamine levels, GlnD hydrolyzes PII-UMP to PII and UMP (deuridylylation). Thus, controls uridylylation state and activity of the PII proteins, and plays an important role in the regulation of nitrogen assimilation and metabolism. The sequence is that of Bifunctional uridylyltransferase/uridylyl-removing enzyme from Aliivibrio fischeri (strain ATCC 700601 / ES114) (Vibrio fischeri).